The primary structure comprises 529 residues: Bifunctional purine biosynthesis protein PurH (529 aa).

The MGS-like domain maps to 1–148 (MQQRRPIRRA…KNHKDVAIVV (148 aa)).

It belongs to the PurH family.

The enzyme catalyses (6R)-10-formyltetrahydrofolate + 5-amino-1-(5-phospho-beta-D-ribosyl)imidazole-4-carboxamide = 5-formamido-1-(5-phospho-D-ribosyl)imidazole-4-carboxamide + (6S)-5,6,7,8-tetrahydrofolate. The catalysed reaction is IMP + H2O = 5-formamido-1-(5-phospho-D-ribosyl)imidazole-4-carboxamide. Its pathway is purine metabolism; IMP biosynthesis via de novo pathway; 5-formamido-1-(5-phospho-D-ribosyl)imidazole-4-carboxamide from 5-amino-1-(5-phospho-D-ribosyl)imidazole-4-carboxamide (10-formyl THF route): step 1/1. It participates in purine metabolism; IMP biosynthesis via de novo pathway; IMP from 5-formamido-1-(5-phospho-D-ribosyl)imidazole-4-carboxamide: step 1/1. This is Bifunctional purine biosynthesis protein PurH from Yersinia pseudotuberculosis serotype IB (strain PB1/+).